Reading from the N-terminus, the 417-residue chain is MLKREMNIADYDAELWQAMEQEKVRQEEHIELIASENYTSPRVMQAQGSQLTNKYAEGYPGKRYYGGCEYVDIVEQLAIDRAKELFGADYANVQPHSGSQANFTVYTALLEPGDTVLGMNLAHGGHLTHGSPVNFSGKLYNIVPYGIDATGHIDYADLEKQAKEHKPKMIIGGFSAYSGVVDWAKMREIADSIGAYLFVDMAHVAGLVAAGVYPNPVPHAHVVTTTTHKTLAGPRGGLILAKGGSEELYKKLNSAVFPGGQGGPLMHVIAGKAVALKEAMEPEFKTYQQQVAKNAKAMVEVFLERGYKVVSGGTDNHLFLVDLVDKNLTGKEADAALGRANITVNKNSVPNDPKSPFVTSGIRVGTPAITRRGFKEAEAKELAGWMCDVLDSINDEAVIERIKGKVLDICARYPVYA.

Lys54 bears the N6-acetyllysine mark. Residues Leu121 and 125–127 (GHL) contribute to the (6S)-5,6,7,8-tetrahydrofolate site. Lys229 carries the N6-(pyridoxal phosphate)lysine modification. Residues Lys250, Lys285, and Lys354 each carry the N6-acetyllysine modification. Residue 355–357 (SPF) participates in (6S)-5,6,7,8-tetrahydrofolate binding. Lys375 carries the post-translational modification N6-acetyllysine.

It belongs to the SHMT family. In terms of assembly, homodimer. Pyridoxal 5'-phosphate serves as cofactor.

Its subcellular location is the cytoplasm. The enzyme catalyses (6R)-5,10-methylene-5,6,7,8-tetrahydrofolate + glycine + H2O = (6S)-5,6,7,8-tetrahydrofolate + L-serine. The protein operates within one-carbon metabolism; tetrahydrofolate interconversion. It functions in the pathway amino-acid biosynthesis; glycine biosynthesis; glycine from L-serine: step 1/1. Catalyzes the reversible interconversion of serine and glycine with tetrahydrofolate (THF) serving as the one-carbon carrier. This reaction serves as the major source of one-carbon groups required for the biosynthesis of purines, thymidylate, methionine, and other important biomolecules. Also exhibits THF-independent aldolase activity toward beta-hydroxyamino acids, producing glycine and aldehydes, via a retro-aldol mechanism. The sequence is that of Serine hydroxymethyltransferase from Shigella dysenteriae serotype 1 (strain Sd197).